Consider the following 874-residue polypeptide: Alanine--tRNA ligase (874 aa).

Residues H564, H568, C665, and H669 each contribute to the Zn(2+) site.

The protein belongs to the class-II aminoacyl-tRNA synthetase family. Requires Zn(2+) as cofactor.

The protein resides in the cytoplasm. The catalysed reaction is tRNA(Ala) + L-alanine + ATP = L-alanyl-tRNA(Ala) + AMP + diphosphate. Functionally, catalyzes the attachment of alanine to tRNA(Ala) in a two-step reaction: alanine is first activated by ATP to form Ala-AMP and then transferred to the acceptor end of tRNA(Ala). Also edits incorrectly charged Ser-tRNA(Ala) and Gly-tRNA(Ala) via its editing domain. In Delftia acidovorans (strain DSM 14801 / SPH-1), this protein is Alanine--tRNA ligase.